Reading from the N-terminus, the 249-residue chain is tRNA (guanine-N(1)-)-methyltransferase (249 aa).

S-adenosyl-L-methionine-binding positions include G117 and 137 to 142; that span reads LGDFVL.

The protein belongs to the RNA methyltransferase TrmD family. As to quaternary structure, homodimer.

The protein localises to the cytoplasm. The enzyme catalyses guanosine(37) in tRNA + S-adenosyl-L-methionine = N(1)-methylguanosine(37) in tRNA + S-adenosyl-L-homocysteine + H(+). In terms of biological role, specifically methylates guanosine-37 in various tRNAs. This Janthinobacterium sp. (strain Marseille) (Minibacterium massiliensis) protein is tRNA (guanine-N(1)-)-methyltransferase.